The primary structure comprises 1225 residues: DNA-directed RNA polymerase subunit beta' (1225 aa).

C60, C62, C75, and C78 together coordinate Zn(2+). Mg(2+) is bound by residues D450, D452, and D454. Positions 818, 892, 899, and 902 each coordinate Zn(2+).

The protein belongs to the RNA polymerase beta' chain family. In terms of assembly, the RNAP catalytic core consists of 2 alpha, 1 beta, 1 beta' and 1 omega subunit. When a sigma factor is associated with the core the holoenzyme is formed, which can initiate transcription. It depends on Mg(2+) as a cofactor. Requires Zn(2+) as cofactor.

The enzyme catalyses RNA(n) + a ribonucleoside 5'-triphosphate = RNA(n+1) + diphosphate. Its function is as follows. DNA-dependent RNA polymerase catalyzes the transcription of DNA into RNA using the four ribonucleoside triphosphates as substrates. This is DNA-directed RNA polymerase subunit beta' from Streptococcus pneumoniae (strain ATCC 700669 / Spain 23F-1).